Here is a 261-residue protein sequence, read N- to C-terminus: Indole-3-glycerol phosphate synthase (261 aa).

It belongs to the TrpC family.

The catalysed reaction is 1-(2-carboxyphenylamino)-1-deoxy-D-ribulose 5-phosphate + H(+) = (1S,2R)-1-C-(indol-3-yl)glycerol 3-phosphate + CO2 + H2O. It participates in amino-acid biosynthesis; L-tryptophan biosynthesis; L-tryptophan from chorismate: step 4/5. The protein is Indole-3-glycerol phosphate synthase of Paraburkholderia phytofirmans (strain DSM 17436 / LMG 22146 / PsJN) (Burkholderia phytofirmans).